Here is a 163-residue protein sequence, read N- to C-terminus: Nucleotide-binding protein tll0793 (163 aa).

This sequence belongs to the YajQ family.

Functionally, nucleotide-binding protein. The sequence is that of Nucleotide-binding protein tll0793 from Thermosynechococcus vestitus (strain NIES-2133 / IAM M-273 / BP-1).